We begin with the raw amino-acid sequence, 362 residues long: Ribosome-binding ATPase YchF (362 aa).

An OBG-type G domain is found at 3–255; it reads FKCGIIGLPN…MSDEEKKSFM (253 aa). 12 to 17 contacts ATP; the sequence is NVGKST. Residues Ser16 and Thr36 each contribute to the Mg(2+) site. Residues 277-360 form the TGS domain; that stretch reads NLITFFTVGD…QDGDIIHFLF (84 aa).

It belongs to the TRAFAC class OBG-HflX-like GTPase superfamily. OBG GTPase family. YchF/OLA1 subfamily. The cofactor is Mg(2+).

In terms of biological role, ATPase that binds to both the 70S ribosome and the 50S ribosomal subunit in a nucleotide-independent manner. This is Ribosome-binding ATPase YchF from Buchnera aphidicola subsp. Acyrthosiphon pisum (strain APS) (Acyrthosiphon pisum symbiotic bacterium).